Consider the following 1415-residue polypeptide: Zygote defective protein 9 (1415 aa).

2 TOG regions span residues 1-250 (MSNW…AKNA) and 251-530 (PPVA…AGPA). A coiled-coil region spans residues 21 to 48 (DELRESKKWQERKEALEALLKVLTDNER). 4 HEAT repeats span residues 30–68 (QERK…VLAK), 95–132 (SFAG…TMQS), 135–172 (TGQE…AKQP), and 179–217 (VVPV…VKNL). Residues 243 to 278 (AEEQAKNAPPVAPTSSTPSASAASGDPSGGTATAVV) form a disordered region. The segment covering 255–276 (PTSSTPSASAASGDPSGGTATA) has biased composition (low complexity). HEAT repeat units lie at residues 339–377 (ANYG…GLRT), 381–418 (PFAV…TTNL), 420–457 (AVGE…QTMP), and 464–502 (LIPS…SLQL). The disordered stretch occupies residues 544–603 (APPAAAPPKKTAPPKKQPEDEEVVEEEDEPLKPPPGDKKKKVPVKENEENEPPVVAPKAE). Residues 562–572 (EDEEVVEEEDE) show a composition bias toward acidic residues. A TOG 3 region spans residues 602–867 (AELLLSDNED…VEERIKRTGV (266 aa)). HEAT repeat units lie at residues 706-743 (IKVL…LKTG), 764-801 (VGPL…NAGI), and 804-841 (LKSL…FEGD). Positions 867-914 (VKPGSGVVTSPPTGGPKILVPQQQGSVVRRPASRSRTREPEPEEVQSD) are disordered.

It belongs to the TOG/XMAP215 family. In terms of assembly, interacts with tac-1 to form a heterodimer.

It is found in the cytoplasm. Its subcellular location is the cytoskeleton. It localises to the spindle pole. The protein localises to the microtubule organizing center. The protein resides in the centrosome. Plays a major role in organizing microtubules and spindle poles during mitosis and meiosis in one-cell stage embryos. Required for default nucleus positioning in oocytes. The protein is Zygote defective protein 9 of Caenorhabditis elegans.